Here is a 234-residue protein sequence, read N- to C-terminus: Enterobactin synthase component D (234 aa).

Mg(2+) is bound by residues Asp107, Glu109, and Glu152.

It belongs to the P-Pant transferase superfamily. EntD family. EntB, EntD, EntE, and EntF form a multienzyme complex called enterobactin synthase. Mg(2+) is required as a cofactor.

Its subcellular location is the membrane. The enzyme catalyses apo-[aryl-carrier protein] + CoA = holo-[aryl-carrier protein] + adenosine 3',5'-bisphosphate + H(+). It carries out the reaction apo-[peptidyl-carrier protein] + CoA = holo-[peptidyl-carrier protein] + adenosine 3',5'-bisphosphate + H(+). Its pathway is siderophore biosynthesis; enterobactin biosynthesis. In terms of biological role, involved in the biosynthesis of the siderophore enterobactin (enterochelin), which is a macrocyclic trimeric lactone of N-(2,3-dihydroxybenzoyl)-serine. The serine trilactone serves as a scaffolding for the three catechol functionalities that provide hexadentate coordination for the tightly ligated iron(2+) atoms. Plays an essential role in the assembly of the enterobactin by catalyzing the transfer of the 4'-phosphopantetheine (Ppant) moiety from coenzyme A to the apo-domains of both EntB (ArCP domain) and EntF (PCP domain) to yield their holo-forms which make them competent for the activation of 2,3-dihydroxybenzoate (DHB) and L-serine, respectively. In Salmonella typhi, this protein is Enterobactin synthase component D.